The chain runs to 265 residues: Probable S-methyl-5'-thioinosine phosphorylase (265 aa).

Phosphate contacts are provided by residues S15 and 55–56 (RH). M187 is a substrate binding site. Position 188 (T188) interacts with phosphate. Substrate is bound at residue 211–213 (NYA).

The protein belongs to the PNP/MTAP phosphorylase family. MTAP subfamily. In terms of assembly, homotrimer.

It catalyses the reaction S-methyl-5'-thioinosine + phosphate = 5-(methylsulfanyl)-alpha-D-ribose 1-phosphate + hypoxanthine. It participates in purine metabolism; purine nucleoside salvage. Catalyzes the reversible phosphorylation of S-methyl-5'-thioinosine (MTI) to hypoxanthine and 5-methylthioribose-1-phosphate. Involved in the breakdown of S-methyl-5'-thioadenosine (MTA), a major by-product of polyamine biosynthesis. Catabolism of (MTA) occurs via deamination to MTI and phosphorolysis to hypoxanthine. This Thermodesulfovibrio yellowstonii (strain ATCC 51303 / DSM 11347 / YP87) protein is Probable S-methyl-5'-thioinosine phosphorylase.